The primary structure comprises 36 residues: Photosystem I reaction center subunit VIII (36 aa).

Residues isoleucine 9–tyrosine 29 traverse the membrane as a helical segment.

Belongs to the PsaI family.

Its subcellular location is the plastid. The protein resides in the chloroplast thylakoid membrane. Its function is as follows. May help in the organization of the PsaL subunit. The chain is Photosystem I reaction center subunit VIII from Huperzia lucidula (Shining clubmoss).